The following is a 319-amino-acid chain: MEPILAKNPNRFVIFPIQYHDIWNMYKKAEASFWTVEEVDISKDINDWNKLTPDEKYFIKHVLAFFAASDGIVNENLAERFCIEVQITEARCFYGFQMAIENIHSEMYSLLIDTYVKDSNEKNYLFNAIETMPCVKKKADWAQKWIHDSAGYGERLIAFAAVEGIFFSGSFASIFWLKKRGLMPGLTFSNELISRDEGLHCDFACLMFKHLLYPPSEETVRSIITDAVSIEQEFLTVALPVKLIGMNCEMMKTYMEFVADRLISELGFKRIYNVTNPSDFMENISLEGKTNFFEKRVGEYQKMGVMSQEDNHFSLDVDF.

Fe cation is bound by residues Asp70, Glu101, and His104. Tyr108 is a catalytic residue. Residues Glu163, Glu197, and His200 each contribute to the Fe cation site. Residues 313-319 form an interaction with R1 region; sequence FSLDVDF.

It belongs to the ribonucleoside diphosphate reductase small chain family. Interacts with RNR1/OPG080 subunit. Can interact with host RNR1 supunit. Fe cation serves as cofactor.

The enzyme catalyses a 2'-deoxyribonucleoside 5'-diphosphate + [thioredoxin]-disulfide + H2O = a ribonucleoside 5'-diphosphate + [thioredoxin]-dithiol. Functionally, ribonucleoside-diphosphate reductase holoenzyme provides the precursors necessary for viral DNA synthesis. Allows virus growth in non-dividing cells. Catalyzes the biosynthesis of deoxyribonucleotides from the corresponding ribonucleotides. This is Ribonucleoside-diphosphate reductase small chain (OPG048) from Homo sapiens (Human).